The sequence spans 517 residues: ATP synthase subunit alpha (517 aa).

174-181 (GDRQTGKT) contributes to the ATP binding site.

Belongs to the ATPase alpha/beta chains family. As to quaternary structure, F-type ATPases have 2 components, CF(1) - the catalytic core - and CF(0) - the membrane proton channel. CF(1) has five subunits: alpha(3), beta(3), gamma(1), delta(1), epsilon(1). CF(0) has four main subunits: a(1), b(1), b'(1) and c(9-12).

The protein resides in the cell inner membrane. The catalysed reaction is ATP + H2O + 4 H(+)(in) = ADP + phosphate + 5 H(+)(out). In terms of biological role, produces ATP from ADP in the presence of a proton gradient across the membrane. The alpha chain is a regulatory subunit. The polypeptide is ATP synthase subunit alpha (Methylibium petroleiphilum (strain ATCC BAA-1232 / LMG 22953 / PM1)).